We begin with the raw amino-acid sequence, 274 residues long: MGICGKLGVAALVALIVGCSPVQSQVPPLTELSPSISVHLLLGNPSGATPTKLTPDNYLMVKNQYALSYNNSKGTANWVAWQLNSSWLGNAERQDNFRPDKTLPAGWVRVTPSMYSGSGYDRGHIAPSADRTKTTEDNAATFLMTNMMPQTPDNNRNTWGNLEDYCRELVSQGKELYIVAGPNGSLGKPLKGKVTVPKSTWKIVVVLDSPGSGLEGITANTRVIAVNIPNDPELNNDWRAYKVSVDELESLTGYDFLSNVSPNIQTSIESKVDN.

Residues M1–S24 form the signal peptide. The active-site Proton acceptor is the H124. Mn(2+) contacts are provided by N155, D246, E249, D255, F256, Q265, and E269.

The protein belongs to the DNA/RNA non-specific endonuclease family. In terms of assembly, monomer. Requires Mn(2+) as cofactor. Mg(2+) is required as a cofactor. Ca(2+) serves as cofactor. The cofactor is Co(2+). Post-translationally, the N-terminus is blocked.

The protein localises to the periplasm. Catalyzes the degradation of both RNA and DNA; has the potential to act as an endonuclease. The chain is Nuclease (nucA) from Nostoc sp. (strain PCC 7120 / SAG 25.82 / UTEX 2576).